Here is a 2629-residue protein sequence, read N- to C-terminus: Telomerase protein component 1 (2629 aa).

4 TEP1 N-terminal repeats span residues 1 to 30 (MEKLCGYVPVHPDILSLKNRCLTMLSDIQP), 31 to 60 (LEKIHGQRSVNPDILSLENRCLTLLPDLQP), 61 to 90 (MEKIHGQRSVHPDILSSENRCLTLLPDLQS), and 91 to 120 (LEKLCGHMSSHPDVLSLENRCLATLPTVKR). The 459-residue stretch at 231–689 (LKLTSGDSDS…VKHNLPPLPG (459 aa)) folds into the TROVE domain. Residues 390–401 (PRKHRSKTRSRQ) are compositionally biased toward basic residues. Residues 390–416 (PRKHRSKTRSRQPPRPQRTKPPFSESG) form a disordered region. The NACHT domain maps to 1175–1582 (RLSLVIGQAG…KFLTNLHVVA (408 aa)). 1181–1188 (GQAGQGKT) serves as a coordination point for ATP. WD repeat units lie at residues 1424–1461 (VLPQALTALEVTHSGLTVDQLHAVLSTWLTLPKETKSW), 1685–1724 (PISSSPTAVAFSPNGQRAAVGTAGGTIYLLNLRTWQEEKA), 1727–1765 (SGCDGISSFAFLSDTALFLTTFDGLLELWDLQHGCWVFQ), 1768–1807 (AHQYQITGCCLSPDRRLLATVCLGGYVKLWDTVQGQLAFQ), 1809–1848 (THPKSLNCITFHPEGQVVATGNWSGIVTFFQADGLKVTKE), 1851–1890 (GPGPSVRTLAFSAPGKVVALGRIDGTVELWAWQEGTRLAA), 1893–1934 (AQCG…GCLG), 1936–1975 (LYLSPALSVALNPDGDQVAVGYRGDGIKIYRISSGPQEAQ), 1978–2016 (ELNVAVSALVWLSPSVLVSGAEDGSLHGWMLRRNSLQSL), 2019–2058 (SSVCQKPVLGLAASQEFLASASEDFTVRLWPRQLLTQPHA), 2070–2109 (GHEGPVCCCSFSPDGRILATAGRDRNLLCWDVKVAQAPLL), 2116–2154 (CHRDWITGCTWTKDNILISCSSDGSVGLWNPEAGQQLGQ), 2157–2194 (GHQSAVSAVVAVEEHIVSVSRDGTLKVWDRQGVELTSI), 2200–2244 (PISQ…QIHT), 2247–2285 (GHSGPVTAAAASEASGLLLTSDNSSVRLWQIPKEADDTC), 2288–2327 (RSSAVITAVAWAPDGSLVVSGNEAGELTLWQKAQAVATAR), 2329–2365 (PGRVSDLIWCSANAFFVLSANENVSEWQVELRKGSTC), 2378–2427 (EDLG…SSIL), 2470–2510 (PNGS…GEWV), 2555–2592 (IHLGSVTALHVLPGLLVTASEDRDVKLWERPSMQLLGL), and 2594–2628 (RCEGPVSCLEPWMEPSSPLQLAVGDAQGNLYFLSW).

In terms of assembly, associated component of the telomerase holoenzyme complex. Component of the vault ribonucleoprotein particle, at least composed of MVP, PARP4 and one or more vault RNAs (vRNAs). Binds to VAULTRC1, VAULTRC2 and VAULTRC4/hvg4 vRNAs.

It is found in the nucleus. The protein localises to the chromosome. The protein resides in the telomere. Its function is as follows. Component of the telomerase ribonucleoprotein complex that is essential for the replication of chromosome termini. Also a component of the ribonucleoprotein vaults particle, a multi-subunit structure involved in nucleo-cytoplasmic transport. Responsible for the localizing and stabilizing vault RNA (vRNA) association in the vault ribonucleoprotein particle. Binds to TERC. The polypeptide is Telomerase protein component 1 (Tep1) (Rattus norvegicus (Rat)).